The chain runs to 635 residues: Threonine--tRNA ligase (635 aa).

A TGS domain is found at 1 to 61 (MIKITLKDGK…HKDSSLEILT (61 aa)). The interval 242-532 (DHRKLGKELD…LIEQYAGAFP (291 aa)) is catalytic. Positions 333, 384, and 509 each coordinate Zn(2+).

Belongs to the class-II aminoacyl-tRNA synthetase family. Homodimer. It depends on Zn(2+) as a cofactor.

The protein localises to the cytoplasm. The catalysed reaction is tRNA(Thr) + L-threonine + ATP = L-threonyl-tRNA(Thr) + AMP + diphosphate + H(+). Functionally, catalyzes the attachment of threonine to tRNA(Thr) in a two-step reaction: L-threonine is first activated by ATP to form Thr-AMP and then transferred to the acceptor end of tRNA(Thr). Also edits incorrectly charged L-seryl-tRNA(Thr). The sequence is that of Threonine--tRNA ligase from Clostridium botulinum (strain Okra / Type B1).